We begin with the raw amino-acid sequence, 598 residues long: MALRCPIVSVLGHVDHGKTSLLDKIRRTRVTQREAGGITQHIGASEIPINTIKKVSKDLLGLFKADLSIPGILVIDTPGHEAFTSLRKRGGALADIAILVVDINEGFKPQTIEAINILKQCKTPFVVAANKVDRIPGWNSSEGPFILNFNEKNQHPNAMTEFEIRLYENVIKHLNELGFDADLFSRVKDTTKTINVVPVSAMTGEGVPDLLVIISGLAQRFLEQKLALNVEGYAKGTVLELKEEKGLGKTIDAIIYDGIAKTGDFLVVGNPDGVLVSKIKALLKPKELDEMRDPKDKFKPSKQISAATGVKISAPDLDSVIAGSPLRIVPKNQVEAAKEEVLEEVEEFTILTDDEGIIIKADTMGSLEALANELRKVNAKIKKAEVGDISKKDVIEASSYASTNPLNGLIISFNTKVLADAKAEIEKSDVKLLEGKIIYKLVEEHEEWTKEMEELMKSDEINRLTKPAMIKILPNCIFRQKEPAVCGVEVLYGTLKIGSPIMSEDGKKLGYVKEMRDNQQENIKEAKVGMQVPVSIDGNIVLGRNAKENDILYVEVPEPEARKLHHEFKDELRGDEKEALSRYMELKQKIENNIFWGM.

One can recognise a tr-type G domain in the interval 3 to 225 (LRCPIVSVLG…GLAQRFLEQK (223 aa)). The G1 stretch occupies residues 12–19 (GHVDHGKT). 12-19 (GHVDHGKT) contributes to the GTP binding site. Residues 37–41 (GITQH) are G2. A G3 region spans residues 76-79 (DTPG). GTP is bound by residues 76–80 (DTPGH) and 130–133 (NKVD). A G4 region spans residues 130-133 (NKVD). The segment at 200 to 202 (SAM) is G5.

Belongs to the TRAFAC class translation factor GTPase superfamily. Classic translation factor GTPase family. IF-2 subfamily.

Its function is as follows. Function in general translation initiation by promoting the binding of the formylmethionine-tRNA to ribosomes. Seems to function along with eIF-2. The protein is Probable translation initiation factor IF-2 of Methanococcus maripaludis (strain DSM 14266 / JCM 13030 / NBRC 101832 / S2 / LL).